A 225-amino-acid polypeptide reads, in one-letter code: Rho GDP-dissociation inhibitor 3 (225 aa).

The protein belongs to the Rho GDI family.

Its subcellular location is the cytoplasm. Functionally, inhibits GDP/GTP exchange reaction of RhoB. Interacts specifically with the GDP- and GTP-bound forms of post-translationally processed Rhob and Rhog proteins, both of which show a growth-regulated expression in mammalian cells. Stimulates the release of the GDP-bound but not the GTP-bound RhoB protein. Also inhibits the GDP/GTP exchange of RhoB but shows less ability to inhibit the dissociation of prebound GTP. This is Rho GDP-dissociation inhibitor 3 (ARHGDIG) from Bos taurus (Bovine).